The sequence spans 326 residues: G-protein coupled receptor 171 (326 aa).

Over 1-19 (MTNSSMFCPIYRDLEPFTY) the chain is Extracellular. Residues 20-40 (FFYLVYLIGIIGSCFATWAFI) traverse the membrane as a helical segment. The Cytoplasmic segment spans residues 41–48 (QKSTNHRC). The chain crosses the membrane as a helical span at residues 49 to 69 (VSIYLINLLTADFLLTLALPV). Residues 70-89 (KIVVDLGVAPWKLRIFHCQV) are Extracellular-facing. A disulfide bond links Cys87 and Cys165. Residues 90-110 (TACLIYINMYLSIIFLAFVSI) traverse the membrane as a helical segment. Residues 111–133 (DRCLQLVHSCKIYRIQEPGFAKM) lie on the Cytoplasmic side of the membrane. A helical membrane pass occupies residues 134-154 (ISAVVWLMVLLIMVPNMVIPI). Residues 155 to 182 (KNIKEKSNVGCMEFKREFGKNWHLLTNF) lie on the Extracellular side of the membrane. Residues 183–203 (ICVAIFLNFSAIILISNFLVI) traverse the membrane as a helical segment. Residues 204 to 221 (RQLYRNRDNANYPSVKSA) lie on the Cytoplasmic side of the membrane. Residues 222–242 (LLNILLVTASYIICFVPYHAV) form a helical membrane-spanning segment. Residues 243-268 (RIPYTLSQTEVISDCSTRIALFKAKE) are Extracellular-facing. The helical transmembrane segment at 269-289 (ATLLLAVSNLCFDPILYYHLS) threads the bilayer. The Cytoplasmic portion of the chain corresponds to 290 to 326 (KAFRLKVTETFASPQKMKAREEKPRRENDVQSTGSAC). Positions 305–326 (KMKAREEKPRRENDVQSTGSAC) are disordered. The segment covering 307–318 (KAREEKPRREND) has biased composition (basic and acidic residues).

Belongs to the G-protein coupled receptor 1 family.

It is found in the cell membrane. G-protein coupled receptor for Big LEN, a 16-amino acid neuropeptide produced from the precursor protein, proSAAS (encoded by PCSK1N). Acts through a G(i)-alpha-mediated pathway in response to Big LEN. Big LEN-GPR171 system plays an important role in regulating feeding and metabolism. Also plays a role in modulating fear and anxiety-like behaviors in the basolateral amygdala. Big LEN-GPR171 modulates the mu-type opioid receptor signaling and antinociception. Acts as a negative regulator T cell function. This chain is G-protein coupled receptor 171, found in Rattus norvegicus (Rat).